A 1457-amino-acid polypeptide reads, in one-letter code: MDAAGEIQKVASMRLGGSMRGDSGSMWRRGDDVFSRSSREEDDEEALRWAALEKLPTYDRVRRAILPLGGDDGAGDGGGKGVVDVHGLGPRERRALLERLVRVADEDNEKFLLKLKDRVDRVGIDMPTIEVRFEHLEAEAEVRVGNSGLPTVLNSITNTLEEAGNALGILPNRKQTMPVLHDVSGIIKPRRMTLLLGPPGSGKTTLLLALAGRLGKDLKASGKVTYNGHGMEEFVPERTAAYISQHDLHIGEMTVRETLAFSARCQGVGSRFDMLTELSRREKAANIKPDADIDAFMKAAAMGGQEANVNTDYILKILGLEICADTMVGDEMLRGISGGQRKRVTTGEMLVGPARALFMDEISTGLDSSTTFQIVNSLRQTVHILGGTAVISLLQPAPETYNLFDDIILLSDGQIVYQGPREDVLEFFESTGFKCPDRKGVADFLQEVTSKKDQRQYWARHDKPYRFVTVKEFVSAFQSFHTGRAIANELAVPFDKSKSHPAALATTRYGAPGKELLKANIDREILLMKRNSFVYMFRTFQLMVVSLIAMTLFFRTKMKRDSVTSGGIYMGALFFGVLMIMFNGFSELALTVFKLPVFFKQRDLLFYPAWSYTIPSWILKIPITFIEVGGYVFLTYYVIGFDSNVGSFFKQYLLMLAINQMAGSLFRFIGGAARNMIVANVFASFMLLIFMVLGGFILAREQVKKWWIWGYWISPMMYAQNAISVNELMGHSWNKIVNSSASNETLGVQVLKSRGVFPEARWYWIGFGAMIGFTILFNALFTLALTYLRPYGNSRQSVSEEELKEKRANLNGEIVGDVHLSSGSTRRPMGNGTENDSTIVDDDTEVTQRGMVLPFTPLSLSFDNVRYSVDMPQEMKAQGVADDRLELLKGVSGSFRPGVLTALMGVSGAGKTTLMDVLAGRKTGGYIEGSINISGYPKKQETFARVSGYCEQNDIHSPQVTVYESLLFSAWLRLPEDVDSNTRKMFIEEVMELVELKSLRDALVGLPGVNGLSTEQRKRLTIAVELVANPSIIFMDEPTSGLDARAAAIVMRTVRNTVNTGRTVVCTIHQPSIDIFEAFDELFLMKRGGEEIYAGPLGHHSSELIKYFESIPGVSKIKDGYNPATWMLEVTTIGQEQALGVDFSDIYKKSELYQRNKALIKDLSQPAPDSSDLYFPTQYSQSSLTQCMACLWKQNLSYWRNPPYNAVRFFFTTVIALLFGTIFWDLGGKVTKSQDLFNAMGSMYAAVLFIGVMNCTSVQPVVAVERTVFYRERAAGMYSAFPYAFGQVVIEIPYTLVQATVYGIIVYAMIGFEWTAAKFFWYLFFMVFTLLYFTFYGMMAVGLTPNYHIASIVSSAFYAIWNLFSGFVIPRPRVPIWWRWYCWACPVAWTLYGLVVSQFGDIETPMEDGTPVKVFVENYFGFKHSWLGWVATVVAAFAFLFASLFGFAIMKFNFQKR.

The disordered stretch occupies residues 14 to 43; sequence RLGGSMRGDSGSMWRRGDDVFSRSSREEDD. Positions 28 to 39 are enriched in basic and acidic residues; the sequence is RRGDDVFSRSSR. Positions 164 to 437 constitute an ABC transporter 1 domain; sequence GNALGILPNR…FESTGFKCPD (274 aa). 197 to 204 is an ATP binding site; it reads GPPGSGKT. Positions 515 to 728 constitute an ABC transmembrane type-2 1 domain; it reads ELLKANIDRE…AQNAISVNEL (214 aa). Helical transmembrane passes span 533 to 553, 565 to 585, 621 to 641, 653 to 673, 677 to 697, 706 to 726, and 765 to 785; these read FVYMFRTFQLMVVSLIAMTLF, SGGIYMGALFFGVLMIMFNGF, IPITFIEVGGYVFLTYYVIGF, LLMLAINQMAGSLFRFIGGAA, IVANVFASFMLLIFMVLGGFI, WWIWGYWISPMMYAQNAISVN, and IGFGAMIGFTILFNALFTLAL. Residues 821-841 form a disordered region; it reads SSGSTRRPMGNGTENDSTIVD. One can recognise an ABC transporter 2 domain in the interval 860 to 1112; sequence LSFDNVRYSV…ELIKYFESIP (253 aa). 905–912 serves as a coordination point for ATP; it reads GVSGAGKT. One can recognise an ABC transmembrane type-2 2 domain in the interval 1185-1399; the sequence is TQCMACLWKQ…TLYGLVVSQF (215 aa). Helical transmembrane passes span 1209–1229, 1244–1264, 1292–1312, 1319–1339, 1349–1369, 1380–1400, and 1429–1449; these read FFFTTVIALLFGTIFWDLGGK, YAAVLFIGVMNCTSVQPVVAV, IPYTLVQATVYGIIVYAMIGF, FFWYLFFMVFTLLYFTFYGMM, IASIVSSAFYAIWNLFSGFVI, WYCWACPVAWTLYGLVVSQFG, and WVATVVAAFAFLFASLFGFAI.

This sequence belongs to the ABC transporter superfamily. ABCG family. PDR (TC 3.A.1.205) subfamily.

The protein resides in the membrane. May be a general defense protein. This chain is ABC transporter G family member 36, found in Oryza sativa subsp. indica (Rice).